Consider the following 388-residue polypeptide: Galactokinase (388 aa).

33–36 (EHTD) serves as a coordination point for substrate. ATP-binding positions include serine 67 and 124 to 130 (GSGLSSS). Residues serine 130 and glutamate 162 each coordinate Mg(2+). The active-site Proton acceptor is aspartate 174. Tyrosine 224 provides a ligand contact to substrate.

Belongs to the GHMP kinase family. GalK subfamily.

It localises to the cytoplasm. The catalysed reaction is alpha-D-galactose + ATP = alpha-D-galactose 1-phosphate + ADP + H(+). Its pathway is carbohydrate metabolism; galactose metabolism. In terms of biological role, catalyzes the transfer of the gamma-phosphate of ATP to D-galactose to form alpha-D-galactose-1-phosphate (Gal-1-P). This Streptococcus thermophilus protein is Galactokinase.